Here is a 404-residue protein sequence, read N- to C-terminus: Tryptophan synthase beta chain (404 aa).

Residue lysine 95 is modified to N6-(pyridoxal phosphate)lysine.

It belongs to the TrpB family. As to quaternary structure, tetramer of two alpha and two beta chains. Pyridoxal 5'-phosphate serves as cofactor.

It carries out the reaction (1S,2R)-1-C-(indol-3-yl)glycerol 3-phosphate + L-serine = D-glyceraldehyde 3-phosphate + L-tryptophan + H2O. It participates in amino-acid biosynthesis; L-tryptophan biosynthesis; L-tryptophan from chorismate: step 5/5. Functionally, the beta subunit is responsible for the synthesis of L-tryptophan from indole and L-serine. This Thermus thermophilus (strain ATCC BAA-163 / DSM 7039 / HB27) protein is Tryptophan synthase beta chain (trpB).